A 573-amino-acid chain; its full sequence is Peptidyl-prolyl cis-trans isomerase-like 2 (573 aa).

The U-box domain maps to 37–119 (QRLPFDCCAL…GNLHDPITYK (83 aa)). The interval 223-247 (KNKSGQSPAPTPSKIDDGKGQEKKE) is disordered. Over residues 236 to 247 (KIDDGKGQEKKE) the composition is skewed to basic and acidic residues. In terms of domain architecture, PPIase cyclophilin-type spans 312–469 (SKAYATITTN…RDIVIQGVTV (158 aa)). Positions 489–510 (DQSDAALKRRAEAQKEREKDRT) are enriched in basic and acidic residues. Residues 489–515 (DQSDAALKRRAEAQKEREKDRTTWLGT) form a disordered region.

The protein belongs to the cyclophilin-type PPIase family. PPIL2 subfamily.

Its subcellular location is the nucleus. The catalysed reaction is [protein]-peptidylproline (omega=180) = [protein]-peptidylproline (omega=0). It carries out the reaction S-ubiquitinyl-[E2 ubiquitin-conjugating enzyme]-L-cysteine + [acceptor protein]-L-lysine = [E2 ubiquitin-conjugating enzyme]-L-cysteine + N(6)-ubiquitinyl-[acceptor protein]-L-lysine.. It functions in the pathway protein modification; protein ubiquitination. May catalyze the cis-trans isomerization of proline imidic peptide bonds in oligopeptides thereby assisting the folding of proteins. May also function as a chaperone, playing a role in intracellular transport of proteins. May also have a protein ubiquitin ligase activity acting as an E3 ubiquitin protein ligase or as a ubiquitin-ubiquitin ligase promoting elongation of ubiquitin chains on proteins. The chain is Peptidyl-prolyl cis-trans isomerase-like 2 (CYP8) from Cryptococcus neoformans var. neoformans serotype D (strain B-3501A) (Filobasidiella neoformans).